We begin with the raw amino-acid sequence, 107 residues long: Theromyzin (107 aa).

Residues 1–21 (MHAKIILALFLGMTAFLAVQA) form the signal peptide.

Coelomic liquid (at protein level). Expressed in large fat cells in contact with coelomic cavities, in intestinal epithelia and at the epidermis level.

Its subcellular location is the secreted. Has bacteriostatic activity against M.luteus. No activity toward E.coli and F.oxysporum. The sequence is that of Theromyzin from Theromyzon tessulatum (Duck leech).